We begin with the raw amino-acid sequence, 121 residues long: Protein FAM241B (121 aa).

The disordered stretch occupies residues 12–58 (QDDDPRVRTTTQPPRGSIPRQSFFNRGHGAPPGGPGPRQQQAGARLG). The segment covering 19–35 (RTTTQPPRGSIPRQSFF) has biased composition (polar residues). At Ser33 the chain carries Phosphoserine. Residues 48–58 (PRQQQAGARLG) show a composition bias toward low complexity. A Phosphoserine modification is found at Ser62. The helical transmembrane segment at 92 to 112 (ILLLFLLMMLGVRGLLLVGLV) threads the bilayer.

This sequence belongs to the FAM241 family.

The protein resides in the membrane. May play a role in lysosome homeostasis. This is Protein FAM241B from Homo sapiens (Human).